A 377-amino-acid polypeptide reads, in one-letter code: Succinyl-diaminopimelate desuccinylase (377 aa).

Histidine 66 provides a ligand contact to Zn(2+). The active site involves aspartate 68. Aspartate 99 contacts Zn(2+). The Proton acceptor role is filled by glutamate 133. Zn(2+) contacts are provided by glutamate 134, glutamate 162, and histidine 348.

Belongs to the peptidase M20A family. DapE subfamily. Homodimer. Zn(2+) is required as a cofactor. Requires Co(2+) as cofactor.

The catalysed reaction is N-succinyl-(2S,6S)-2,6-diaminopimelate + H2O = (2S,6S)-2,6-diaminopimelate + succinate. The protein operates within amino-acid biosynthesis; L-lysine biosynthesis via DAP pathway; LL-2,6-diaminopimelate from (S)-tetrahydrodipicolinate (succinylase route): step 3/3. Catalyzes the hydrolysis of N-succinyl-L,L-diaminopimelic acid (SDAP), forming succinate and LL-2,6-diaminopimelate (DAP), an intermediate involved in the bacterial biosynthesis of lysine and meso-diaminopimelic acid, an essential component of bacterial cell walls. The polypeptide is Succinyl-diaminopimelate desuccinylase (Histophilus somni (strain 129Pt) (Haemophilus somnus)).